A 217-amino-acid polypeptide reads, in one-letter code: Protein-L-isoaspartate O-methyltransferase (217 aa).

S67 is an active-site residue.

Belongs to the methyltransferase superfamily. L-isoaspartyl/D-aspartyl protein methyltransferase family.

It localises to the cytoplasm. It carries out the reaction [protein]-L-isoaspartate + S-adenosyl-L-methionine = [protein]-L-isoaspartate alpha-methyl ester + S-adenosyl-L-homocysteine. Functionally, catalyzes the methyl esterification of L-isoaspartyl residues in peptides and proteins that result from spontaneous decomposition of normal L-aspartyl and L-asparaginyl residues. It plays a role in the repair and/or degradation of damaged proteins. This Azoarcus sp. (strain BH72) protein is Protein-L-isoaspartate O-methyltransferase.